The following is a 267-amino-acid chain: DNA damage-regulated autophagy modulator protein 2 (267 aa).

6 consecutive transmembrane segments (helical) span residues 8-28 (LSFLPSALVIWTFATFIFSYI), 53-73 (RCLFGVMLNIAAVLGIATIYV), 87-107 (LIIKLNKAGLVLGILSCLGLS), 118-138 (FIVHVCGAVLAFSMGSFYMFV), 160-180 (LLLVIWCGVSALSMMTCSSIL), and 203-223 (VLHIVTTAAEWSMSFSFFGFF).

The protein belongs to the DRAM/TMEM150 family.

It is found in the lysosome membrane. The protein localises to the photoreceptor inner segment. The protein resides in the apical cell membrane. Plays a role in the initiation of autophagy. In the retina, might be involved in the process of photoreceptor cells renewal and recycling to preserve visual function. Induces apoptotic cell death when coexpressed with DRAM1. The sequence is that of DNA damage-regulated autophagy modulator protein 2 (Dram2) from Rattus norvegicus (Rat).